We begin with the raw amino-acid sequence, 182 residues long: Mesencephalic astrocyte-derived neurotrophic factor (182 aa).

The signal sequence occupies residues 1–24; the sequence is MRRMWATQGLAVALALSVLPGSRA. 4 disulfide bridges follow: Cys30/Cys117, Cys33/Cys106, Cys64/Cys75, and Cys151/Cys154. Position 76 is a phosphotyrosine (Tyr76). An interacts with ERN1, EIF2AK3 and ATF6 region spans residues 96–158; it reads LAHHIPVEKI…ETCKGCAEKS (63 aa). Residues 129–172 form an interacts with HSPA5 region; the sequence is TVDLKKLRVKELKKILDDWGETCKGCAEKSDYIRKINELMPKYA.

This sequence belongs to the ARMET family. In terms of assembly, interacts directly (via SAP domain) with HSPA5/BiP; the interaction inhibits ATP binding to HSPA5/BiP and subsequent nucleotide exchange. Component of a complex containing at least CRELD2, MANF, MATN3 and PDIA4. Interacts (via C-terminus) with ERN1 (via luminal domain); the interaction is decreased in the presence of increasing concentrations of Ca(2+). May contain sialic acid residues.

The protein localises to the secreted. Its subcellular location is the endoplasmic reticulum lumen. It localises to the sarcoplasmic reticulum lumen. Selectively promotes the survival of dopaminergic neurons of the ventral mid-brain. Modulates GABAergic transmission to the dopaminergic neurons of the substantia nigra. Enhances spontaneous, as well as evoked, GABAergic inhibitory postsynaptic currents in dopaminergic neurons. Inhibits cell proliferation and endoplasmic reticulum (ER) stress-induced cell death. Retained in the ER/sarcoplasmic reticulum (SR) through association with the endoplasmic reticulum chaperone protein HSPA5 under normal conditions. Stabilizes HSPA5/BiP in its substrate-bound ADP state, which facilitates HSPA5/BiP incorporation into chaperone-client complexes during endoplasmic reticulum stress, its interaction with HSPA5/BiP inhibits ATP binding to HSPA5/BiP and subsequent nucleotide exchange. As a result acts as a repressor of the unfolded protein response (UPR) pathway. Up-regulated and secreted by the ER/SR in response to ER stress and hypoxia. Following secretion by the ER/SR, directly binds to 3-O-sulfogalactosylceramide, a lipid sulfatide in the outer cell membrane of target cells. Sulfatide binding promotes its cellular uptake by endocytosis, and is required for its role in alleviating ER stress and cell toxicity under hypoxic and ER stress conditions. Essential for embryonic lung development. Required for the correct postnatal temporal and structural development of splenic white pulp. Required for the repair-associated myeloid response in skeletal muscle, acts as a regulator of phenotypic transition towards prorepair macrophages in response to muscle injury and as a result limits excessive proinflammatory signaling. Represses RELA expression and therefore NF-kB signaling in the myocardium, as a result limits macrophage infiltration of injured tissue and M1 macrophage differentiation in response to myocardial injury. Required for endochondral ossification in long bones and the skull during postnatal development. The protein is Mesencephalic astrocyte-derived neurotrophic factor of Homo sapiens (Human).